Here is a 117-residue protein sequence, read N- to C-terminus: Putative membrane protein insertion efficiency factor (117 aa).

It belongs to the UPF0161 family.

Its subcellular location is the cell inner membrane. Its function is as follows. Could be involved in insertion of integral membrane proteins into the membrane. The polypeptide is Putative membrane protein insertion efficiency factor (Helicobacter pylori (strain ATCC 700392 / 26695) (Campylobacter pylori)).